Reading from the N-terminus, the 319-residue chain is Acetyl-coenzyme A carboxylase carboxyl transferase subunit alpha (319 aa).

Positions 35–296 constitute a CoA carboxyltransferase C-terminal domain; it reads NIDEEVHRLR…KAQLLEDLAD (262 aa).

This sequence belongs to the AccA family. In terms of assembly, acetyl-CoA carboxylase is a heterohexamer composed of biotin carboxyl carrier protein (AccB), biotin carboxylase (AccC) and two subunits each of ACCase subunit alpha (AccA) and ACCase subunit beta (AccD).

The protein localises to the cytoplasm. The catalysed reaction is N(6)-carboxybiotinyl-L-lysyl-[protein] + acetyl-CoA = N(6)-biotinyl-L-lysyl-[protein] + malonyl-CoA. It participates in lipid metabolism; malonyl-CoA biosynthesis; malonyl-CoA from acetyl-CoA: step 1/1. Its function is as follows. Component of the acetyl coenzyme A carboxylase (ACC) complex. First, biotin carboxylase catalyzes the carboxylation of biotin on its carrier protein (BCCP) and then the CO(2) group is transferred by the carboxyltransferase to acetyl-CoA to form malonyl-CoA. This is Acetyl-coenzyme A carboxylase carboxyl transferase subunit alpha from Salmonella paratyphi C (strain RKS4594).